A 588-amino-acid chain; its full sequence is Tetratricopeptide repeat protein 39B (588 aa).

TPR repeat units follow at residues 294–327 (SIIL…QQEW), 485–518 (CLVQ…EKRV), and 526–559 (PFTF…YKDY).

It belongs to the TTC39 family.

In terms of biological role, may be involved in lipid metabolism. The protein is Tetratricopeptide repeat protein 39B (ttc39b) of Xenopus tropicalis (Western clawed frog).